The chain runs to 438 residues: uncharacterized protein (438 aa).

The signal sequence occupies residues 1–20; sequence MNTRLALVLCAVGSGVLSFS. The N-palmitoyl cysteine moiety is linked to residue C21. A lipid anchor (S-diacylglycerol cysteine) is attached at C21.

It is found in the cell membrane. This is an uncharacterized protein from Treponema pallidum (strain Nichols).